Here is a 1162-residue protein sequence, read N- to C-terminus: DNA-directed RNA polymerase subunit beta (1162 aa).

The protein belongs to the RNA polymerase beta chain family. In terms of assembly, the RNAP catalytic core consists of 2 alpha, 1 beta, 1 beta' and 1 omega subunit. When a sigma factor is associated with the core the holoenzyme is formed, which can initiate transcription.

The enzyme catalyses RNA(n) + a ribonucleoside 5'-triphosphate = RNA(n+1) + diphosphate. Its function is as follows. DNA-dependent RNA polymerase catalyzes the transcription of DNA into RNA using the four ribonucleoside triphosphates as substrates. The polypeptide is DNA-directed RNA polymerase subunit beta (Clavibacter michiganensis subsp. michiganensis (strain NCPPB 382)).